The sequence spans 396 residues: L-lactate dehydrogenase (396 aa).

An FMN hydroxy acid dehydrogenase domain is found at 1–380; sequence MIISAASDYR…SGDSLVQELG (380 aa). Y24 is a binding site for substrate. FMN contacts are provided by S106 and Q127. Y129 is a substrate binding site. T155 serves as a coordination point for FMN. R164 is a binding site for substrate. K251 is an FMN binding site. The active-site Proton acceptor is the H275. R278 provides a ligand contact to substrate. Position 306–330 (306–330) interacts with FMN; the sequence is DSGIRNGLDVVRMIALGADTVLLGR.

Belongs to the FMN-dependent alpha-hydroxy acid dehydrogenase family. FMN is required as a cofactor.

The protein localises to the cell inner membrane. The catalysed reaction is (S)-lactate + A = pyruvate + AH2. Its function is as follows. Catalyzes the conversion of L-lactate to pyruvate. Is coupled to the respiratory chain. The sequence is that of L-lactate dehydrogenase from Salmonella paratyphi A (strain ATCC 9150 / SARB42).